The chain runs to 764 residues: Thyrotropin receptor (764 aa).

The signal sequence occupies residues Met-1–Gly-21. Over Lys-22–Gly-413 the chain is Extracellular. Cys-31 and Cys-41 are disulfide-bonded. 2 N-linked (GlcNAc...) asparagine glycosylation sites follow: Asn-77 and Asn-99. LRR repeat units follow at residues Leu-100 to Glu-124, Leu-125 to Thr-150, Asp-151 to Gly-174, Cys-176 to Gly-199, Thr-200 to Gly-223, Tyr-225 to His-248, and Pro-264 to Asn-288. 2 N-linked (GlcNAc...) asparagine glycosylation sites follow: Asn-177 and Asn-198. Asn-302 is a glycosylation site (N-linked (GlcNAc...) asparagine). Tyr-385 carries the sulfotyrosine modification. A helical membrane pass occupies residues Tyr-414–Thr-441. Topologically, residues Ser-442–Arg-450 are cytoplasmic. Residues Phe-451 to Val-473 form a helical membrane-spanning segment. The Extracellular segment spans residues Asp-474–Cys-494. Cys-494 and Cys-569 form a disulfide bridge. The chain crosses the membrane as a helical span at residues Asn-495–Leu-517. Residues Glu-518–His-537 lie on the Cytoplasmic side of the membrane. A helical transmembrane segment spans residues Ala-538–Ile-560. The Extracellular portion of the chain corresponds to Ser-561–Leu-580. Residues Ala-581–Val-602 traverse the membrane as a helical segment. Topologically, residues Lys-603–Arg-625 are cytoplasmic. A helical membrane pass occupies residues Met-626 to Met-649. Residues Asn-650 to Lys-660 lie on the Extracellular side of the membrane. Residues Ile-661–Thr-682 form a helical membrane-spanning segment. Residues Lys-683 to Leu-764 are Cytoplasmic-facing. The PDZ-binding motif lies at Thr-762–Leu-764.

Belongs to the G-protein coupled receptor 1 family. FSH/LSH/TSH subfamily. Interacts with heterodimer GPHA2:GPHB5; this interaction stimulates cAMP production. Interacts (via the PDZ-binding motif) with SCRIB; regulates TSHR trafficking and function. Post-translationally, glycosylated. Sulfated. Sulfation on Tyr-385 plays a role in thyrotropin receptor binding and activation.

The protein localises to the cell membrane. It localises to the basolateral cell membrane. In terms of biological role, receptor for the thyroid-stimulating hormone (TSH) or thyrotropin. Also acts as a receptor for the heterodimeric glycoprotein hormone (GPHA2:GPHB5) or thyrostimulin. The activity of this receptor is mediated by G proteins which activate adenylate cyclase. Plays a central role in controlling thyroid cell metabolism. This Mus musculus (Mouse) protein is Thyrotropin receptor (Tshr).